The chain runs to 251 residues: Blue-light absorbing proteorhodopsin (251 aa).

The first 18 residues, 1–18, serve as a signal peptide directing secretion; sequence MGKLLLILGSAIALPSFA. A run of 7 helical transmembrane segments spans residues 30–50, 65–85, 97–117, 120–140, 144–164, 190–210, and 223–243; these read VGVSFWLVTAGMLAATVFFFV, VSGLITGIAFWHYLYMRGVWI, IDWLLTVPLQVVEFYLILAAC, VAASLFKKLLAGSLVMLGAGF, AGLAPVLPAFIIGMAGWLYMI, MMMIIVVGWAIYPAGYAAGYL, and LIYNLADFVNKILFGLIIWNV. The residue at position 233 (lysine 233) is an N6-(retinylidene)lysine.

This sequence belongs to the archaeal/bacterial/fungal opsin family. Post-translationally, contains one covalently linked retinal chromophore.

The protein resides in the cell membrane. Light-driven proton pump. May have a regulatory rather than energy harvesting function, based on light-induced opening of proton channels, to modulate cell physiology depending on light intensity variations. Could be, therefore, a sensory rhodopsin, potentially associated with a transducer component. This Gamma-proteobacterium Hot 75m4 protein is Blue-light absorbing proteorhodopsin.